Here is a 69-residue protein sequence, read N- to C-terminus: Cytochrome b-c1 complex subunit 6-1, mitochondrial (69 aa).

2 disulfides stabilise this stretch: C17–C59 and C31–C45.

The protein belongs to the UQCRH/QCR6 family. In terms of assembly, component of the ubiquinol-cytochrome c oxidoreductase (cytochrome b-c1 complex, complex III, CIII), a multisubunit enzyme composed of 10 subunits. The complex is composed of 3 respiratory subunits cytochrome b (MT-CYB), cytochrome c1 (CYC1-1 or CYC1-2) and Rieske protein (UCR1-1 or UCR1-2), 2 core protein subunits MPPalpha1 (or MPPalpha2) and MPPB, and 5 low-molecular weight protein subunits QCR7-1 (or QCR7-2), UCRQ-1 (or UCRQ-2), QCR9, UCRY and probably QCR6-1 (or QCR6-2). The complex exists as an obligatory dimer and forms supercomplexes (SCs) in the inner mitochondrial membrane with NADH-ubiquinone oxidoreductase (complex I, CI), resulting in different assemblies (supercomplexes SCI(1)III(2) and SCI(2)III(4)).

It localises to the mitochondrion inner membrane. Its function is as follows. Component of the ubiquinol-cytochrome c oxidoreductase, a multisubunit transmembrane complex that is part of the mitochondrial electron transport chain which drives oxidative phosphorylation. The respiratory chain contains 3 multisubunit complexes succinate dehydrogenase (complex II, CII), ubiquinol-cytochrome c oxidoreductase (cytochrome b-c1 complex, complex III, CIII) and cytochrome c oxidase (complex IV, CIV), that cooperate to transfer electrons derived from NADH and succinate to molecular oxygen, creating an electrochemical gradient over the inner membrane that drives transmembrane transport and the ATP synthase. The cytochrome b-c1 complex catalyzes electron transfer from ubiquinol to cytochrome c, linking this redox reaction to translocation of protons across the mitochondrial inner membrane, with protons being carried across the membrane as hydrogens on the quinol. In the process called Q cycle, 2 protons are consumed from the matrix, 4 protons are released into the intermembrane space and 2 electrons are passed to cytochrome c. The protein is Cytochrome b-c1 complex subunit 6-1, mitochondrial (QCR6-1) of Arabidopsis thaliana (Mouse-ear cress).